An 809-amino-acid polypeptide reads, in one-letter code: Chorion peroxidase (809 aa).

The signal sequence occupies residues 1–21; it reads MSRILFILLLLIVTQLSELQA. The propeptide occupies 22 to 223; that stretch reads AAFSVRQNRF…KFTETPLAHH (202 aa). The disordered stretch occupies residues 36-55; the sequence is DLQTPAPLATSTESSKKPEK. Residue asparagine 110 is glycosylated (N-linked (GlcNAc...) asparagine). At cysteine 224 the chain carries N-acetylcysteine; in Chorion peroxidase light chain. A disulfide bridge connects residues cysteine 230 and cysteine 244. Histidine 320 serves as the catalytic Proton acceptor. A disulfide bridge connects residues cysteine 448 and cysteine 457. Histidine 568 is a binding site for heme b. Cysteine 765 and cysteine 794 form a disulfide bridge.

This sequence belongs to the peroxidase family. XPO subfamily. Heterodimer. Requires heme b as cofactor. In terms of tissue distribution, expressed at low levels in the germarium and early follicles. Expression becomes progressively stronger during vitellogenesis, and is highly expressed in germ cells and somatic cells. A subset of follicle cells, termed border cells (BC), exhibit a high level of expression.

The protein resides in the secreted. The enzyme catalyses 2 a phenolic donor + H2O2 = 2 a phenolic radical donor + 2 H2O. Its function is as follows. Required for ovarian follicle maturation. Involved in the formation of a rigid and insoluble egg chorion by catalyzing chorion protein cross-linking through dityrosine formation and phenol oxidase-catalyzed chorion melanization. This Drosophila melanogaster (Fruit fly) protein is Chorion peroxidase (Pxt).